Here is a 105-residue protein sequence, read N- to C-terminus: Large ribosomal subunit protein uL24 (105 aa).

The protein belongs to the universal ribosomal protein uL24 family. Part of the 50S ribosomal subunit.

Its function is as follows. One of two assembly initiator proteins, it binds directly to the 5'-end of the 23S rRNA, where it nucleates assembly of the 50S subunit. Functionally, one of the proteins that surrounds the polypeptide exit tunnel on the outside of the subunit. The chain is Large ribosomal subunit protein uL24 from Clostridium novyi (strain NT).